The chain runs to 210 residues: Homeobox protein Rhox5 (210 aa).

A disordered region spans residues 1–119 (MEAEGSSRKV…GNPGGRQMPL (119 aa)). Positions 17-30 (GVKEDSEEQHDVKA) are enriched in basic and acidic residues. Over residues 47–79 (GQPGVGAVGTEGEGEELNGGKGHFGPGAPGPMG) the composition is skewed to gly residues. A DNA-binding region (homeobox; atypical) is located at residues 117–175 (MPLQGSRFAQHRLRELESILQRTNSFDVPREDLDRLMDACVSRVQNWFKIRRAAARRTR).

It localises to the nucleus. Its function is as follows. Transcription factor required for differentiation of embryonic stem cells (ESCs) into primordial germ cells. The protein is Homeobox protein Rhox5 (Rhox5) of Mus musculus (Mouse).